A 101-amino-acid polypeptide reads, in one-letter code: Small ribosomal subunit protein uS14 (101 aa).

It belongs to the universal ribosomal protein uS14 family. In terms of assembly, part of the 30S ribosomal subunit. Contacts proteins S3 and S10.

Binds 16S rRNA, required for the assembly of 30S particles and may also be responsible for determining the conformation of the 16S rRNA at the A site. In Blochmanniella floridana, this protein is Small ribosomal subunit protein uS14.